We begin with the raw amino-acid sequence, 454 residues long: O-phospho-L-seryl-tRNA:Cys-tRNA synthase 2 (454 aa).

Residues 146–147, Asn251, and 274–276 contribute to the pyridoxal 5'-phosphate site; these read AR and SGH. An N6-(pyridoxal phosphate)lysine modification is found at Lys277.

Belongs to the SepCysS family. Homodimer. Interacts with SepRS. The cofactor is pyridoxal 5'-phosphate.

The catalysed reaction is O-phospho-L-seryl-tRNA(Cys) + hydrogen sulfide + H(+) = L-cysteinyl-tRNA(Cys) + phosphate. Converts O-phospho-L-seryl-tRNA(Cys) (Sep-tRNA(Cys)) to L-cysteinyl-tRNA(Cys) (Cys-tRNA(Cys)). The polypeptide is O-phospho-L-seryl-tRNA:Cys-tRNA synthase 2 (Methanoregula boonei (strain DSM 21154 / JCM 14090 / 6A8)).